Consider the following 573-residue polypeptide: Urease subunit alpha (573 aa).

In terms of domain architecture, Urease spans 136–573; it reads GGIDCHVHFI…LPMAQRYFLF (438 aa). The Ni(2+) site is built by H141, H143, and K224. N6-carboxylysine is present on K224. H226 lines the substrate pocket. Ni(2+)-binding residues include H253 and H279. Residue H327 is the Proton donor of the active site. Residue D367 coordinates Ni(2+).

This sequence belongs to the metallo-dependent hydrolases superfamily. Urease alpha subunit family. Heterotrimer of UreA (gamma), UreB (beta) and UreC (alpha) subunits. Three heterotrimers associate to form the active enzyme. It depends on Ni cation as a cofactor. Post-translationally, carboxylation allows a single lysine to coordinate two nickel ions.

The protein localises to the cytoplasm. It catalyses the reaction urea + 2 H2O + H(+) = hydrogencarbonate + 2 NH4(+). Its pathway is nitrogen metabolism; urea degradation; CO(2) and NH(3) from urea (urease route): step 1/1. The polypeptide is Urease subunit alpha (Rhodococcus opacus (strain B4)).